A 763-amino-acid chain; its full sequence is Phosphoglycerol transferase I (763 aa).

Helical transmembrane passes span 1–21 (MSEL…AWKA), 26–46 (WWFA…ITLF), 77–97 (ILPG…LGWI), and 108–128 (FGYS…SPAF).

It belongs to the OpgB family.

Its subcellular location is the cell inner membrane. It catalyses the reaction a phosphatidylglycerol + a membrane-derived-oligosaccharide D-glucose = a 1,2-diacyl-sn-glycerol + a membrane-derived-oligosaccharide 6-(glycerophospho)-D-glucose.. The protein operates within glycan metabolism; osmoregulated periplasmic glucan (OPG) biosynthesis. In terms of biological role, transfers a phosphoglycerol residue from phosphatidylglycerol to the membrane-bound nascent glucan backbones. This chain is Phosphoglycerol transferase I, found in Escherichia coli (strain 55989 / EAEC).